The sequence spans 278 residues: Neuronal membrane glycoprotein M6-a (278 aa).

Position 1 is an N-acetylmethionine (M1). At 1 to 22 (MEENMEEGQTQKGCFECCIKCL) the chain is on the cytoplasmic side. The helical transmembrane segment at 23–43 (GGIPYASLIATILLYAGVALF) threads the bilayer. Residues 44 to 84 (CGCGHEALSGTVNILQTYFELARTAGDTLDVFTMIDIFKYV) are Extracellular-facing. A helical transmembrane segment spans residues 85-105 (IYGIAAAFFVYGILLMVEGFF). Residues 106–127 (TTGAIKDLYGDFKITTCGRCVS) lie on the Cytoplasmic side of the membrane. Residues 128–148 (AWFIMLTYLFMLAWLGVTAFT) traverse the membrane as a helical segment. Over 149 to 213 (SLPVYMYFNV…STELNMTFHL (65 aa)) the chain is Extracellular. The N-linked (GlcNAc...) asparagine glycan is linked to N164. Cysteines 174 and 192 form a disulfide. N-linked (GlcNAc...) asparagine glycosylation occurs at N208. A helical membrane pass occupies residues 214 to 234 (FIVALAGAGAAVIAMVHYLMV). Residues 235 to 278 (LSANWAYVKDACRMQKYEDIKSKEEQELHDIHSTRSKERLNAYT) lie on the Cytoplasmic side of the membrane. S256 is subject to Phosphoserine. Residue T278 is modified to Phosphothreonine.

It belongs to the myelin proteolipid protein family. As to quaternary structure, interacts with OPRM1. Interacts with palmitoyltransferase ZDHHC17/HIP14; the interaction leads to palmitoylation of GPM6A. N-glycosylated. Post-translationally, palmitoylated by ZDHHC17/HIP14. Widely expressed in the CNS. Found especially in the granule cell layer of the cerebellum but not in the molecular layer or white matter. Expressed in the immature embryonic retina including the nerve fiber layer (NFL), inner plexiform layer (IPL), and outer plexiform layer (OPL). Weakly expressed in processes of Mueller glia cells.

Its subcellular location is the cell membrane. It is found in the cell projection. It localises to the axon. The protein localises to the growth cone. The protein resides in the dendritic spine. Its subcellular location is the filopodium. It is found in the neuron projection. Functionally, involved in neuronal differentiation, including differentiation and migration of neuronal stem cells. Plays a role in neuronal plasticity and is involved in neurite and filopodia outgrowth, filopodia motility and probably synapse formation. Gpm6a-induced filopodia formation involves mitogen-activated protein kinase (MAPK) and Src signaling pathways. Conflictingly, PubMed:22162747 reports that induced cellular protrusions are simple membrane-wrapped tubules without actin or tubulin-based cytoskeletons and with Gpm6a gliding along membrane edges indicative for a function in actin-independent membrane deformation. May be involved in neuronal NGF-dependent Ca(2+) influx. May be involved in regulation of endocytosis and intracellular trafficking of G-protein-coupled receptors (GPCRs); enhances internalization and recycling of mu-type opioid receptor. The sequence is that of Neuronal membrane glycoprotein M6-a (Gpm6a) from Mus musculus (Mouse).